We begin with the raw amino-acid sequence, 372 residues long: 4-hydroxy-3-methylbut-2-en-1-yl diphosphate synthase (flavodoxin) (372 aa).

[4Fe-4S] cluster-binding residues include Cys-270, Cys-273, Cys-305, and Glu-312.

This sequence belongs to the IspG family. The cofactor is [4Fe-4S] cluster.

The enzyme catalyses (2E)-4-hydroxy-3-methylbut-2-enyl diphosphate + oxidized [flavodoxin] + H2O + 2 H(+) = 2-C-methyl-D-erythritol 2,4-cyclic diphosphate + reduced [flavodoxin]. The protein operates within isoprenoid biosynthesis; isopentenyl diphosphate biosynthesis via DXP pathway; isopentenyl diphosphate from 1-deoxy-D-xylulose 5-phosphate: step 5/6. In terms of biological role, converts 2C-methyl-D-erythritol 2,4-cyclodiphosphate (ME-2,4cPP) into 1-hydroxy-2-methyl-2-(E)-butenyl 4-diphosphate. The polypeptide is 4-hydroxy-3-methylbut-2-en-1-yl diphosphate synthase (flavodoxin) (Pseudoalteromonas translucida (strain TAC 125)).